Here is a 357-residue protein sequence, read N- to C-terminus: Dihydroorotate dehydrogenase (quinone) (357 aa).

FMN is bound by residues 61–65 (AGFDK) and threonine 85. Lysine 65 lines the substrate pocket. 110-114 (NRFGF) is a substrate binding site. The FMN site is built by asparagine 141 and asparagine 172. Residue asparagine 172 coordinates substrate. The Nucleophile role is filled by serine 175. Residue asparagine 177 coordinates substrate. FMN contacts are provided by lysine 217 and glycine 245. Residue 246–247 (NT) participates in substrate binding. FMN-binding positions include glycine 268, glycine 297, and 318–319 (YS).

It belongs to the dihydroorotate dehydrogenase family. Type 2 subfamily. As to quaternary structure, monomer. It depends on FMN as a cofactor.

Its subcellular location is the cell membrane. It carries out the reaction (S)-dihydroorotate + a quinone = orotate + a quinol. The protein operates within pyrimidine metabolism; UMP biosynthesis via de novo pathway; orotate from (S)-dihydroorotate (quinone route): step 1/1. Its function is as follows. Catalyzes the conversion of dihydroorotate to orotate with quinone as electron acceptor. The chain is Dihydroorotate dehydrogenase (quinone) from Xanthobacter autotrophicus (strain ATCC BAA-1158 / Py2).